The chain runs to 133 residues: Ribosome-binding factor A (133 aa).

The protein belongs to the RbfA family. Monomer. Binds 30S ribosomal subunits, but not 50S ribosomal subunits or 70S ribosomes.

The protein localises to the cytoplasm. In terms of biological role, one of several proteins that assist in the late maturation steps of the functional core of the 30S ribosomal subunit. Associates with free 30S ribosomal subunits (but not with 30S subunits that are part of 70S ribosomes or polysomes). Required for efficient processing of 16S rRNA. May interact with the 5'-terminal helix region of 16S rRNA. The protein is Ribosome-binding factor A of Klebsiella pneumoniae (strain 342).